The sequence spans 284 residues: ATP phosphoribosyltransferase (284 aa).

The protein belongs to the ATP phosphoribosyltransferase family. Long subfamily. Mg(2+) is required as a cofactor.

The protein localises to the cytoplasm. It catalyses the reaction 1-(5-phospho-beta-D-ribosyl)-ATP + diphosphate = 5-phospho-alpha-D-ribose 1-diphosphate + ATP. It functions in the pathway amino-acid biosynthesis; L-histidine biosynthesis; L-histidine from 5-phospho-alpha-D-ribose 1-diphosphate: step 1/9. With respect to regulation, feedback inhibited by histidine. In terms of biological role, catalyzes the condensation of ATP and 5-phosphoribose 1-diphosphate to form N'-(5'-phosphoribosyl)-ATP (PR-ATP). Has a crucial role in the pathway because the rate of histidine biosynthesis seems to be controlled primarily by regulation of HisG enzymatic activity. The sequence is that of ATP phosphoribosyltransferase from Corynebacterium kroppenstedtii (strain DSM 44385 / JCM 11950 / CIP 105744 / CCUG 35717).